We begin with the raw amino-acid sequence, 270 residues long: Phosphatidylglycerol--prolipoprotein diacylglyceryl transferase (270 aa).

4 consecutive transmembrane segments (helical) span residues 18–38 (IAVH…LWLA), 55–75 (LVLF…VIFQ), 89–109 (IWNG…TGII), and 115–135 (GLSF…GQAI). R137 serves as a coordination point for a 1,2-diacyl-sn-glycero-3-phospho-(1'-sn-glycerol). The next 3 membrane-spanning stretches (helical) occupy residues 177–197 (QPTF…LLLL), 205–225 (GELF…IEGL), and 236–256 (LRIA…LIAY).

It belongs to the Lgt family.

The protein resides in the cell membrane. The enzyme catalyses L-cysteinyl-[prolipoprotein] + a 1,2-diacyl-sn-glycero-3-phospho-(1'-sn-glycerol) = an S-1,2-diacyl-sn-glyceryl-L-cysteinyl-[prolipoprotein] + sn-glycerol 1-phosphate + H(+). Its pathway is protein modification; lipoprotein biosynthesis (diacylglyceryl transfer). Catalyzes the transfer of the diacylglyceryl group from phosphatidylglycerol to the sulfhydryl group of the N-terminal cysteine of a prolipoprotein, the first step in the formation of mature lipoproteins. The chain is Phosphatidylglycerol--prolipoprotein diacylglyceryl transferase from Bacillus licheniformis (strain ATCC 14580 / DSM 13 / JCM 2505 / CCUG 7422 / NBRC 12200 / NCIMB 9375 / NCTC 10341 / NRRL NRS-1264 / Gibson 46).